We begin with the raw amino-acid sequence, 956 residues long: Chromatin assembly factor 1 subunit A (956 aa).

The segment at 1-49 (MLEELECGAPGARGAATAMDCKDRPAFPVKKLIQARLPFKRLNLVPKGK) is binds to PCNA. Residues 1-314 (MLEELECGAP…QHSSTSPFPT (314 aa)) are binds to CBX1 chromo shadow domain. Disordered regions lie at residues 45 to 65 (VPKG…QSKS) and 122 to 155 (DSNE…EDTG). Over residues 56–65 (DQGTSVQSKS) the composition is skewed to polar residues. A phosphoserine mark is found at Ser-65, Ser-123, Ser-138, Ser-141, and Ser-143. Residue Lys-182 forms a Glycyl lysine isopeptide (Lys-Gly) (interchain with G-Cter in SUMO1); alternate linkage. A Glycyl lysine isopeptide (Lys-Gly) (interchain with G-Cter in SUMO2); alternate cross-link involves residue Lys-182. Positions 188 to 222 (VGCGGAGRRGDSQECSPRSCPELTSGPRMCPRKEQ) are disordered. A phosphoserine mark is found at Ser-206 and Ser-224. A PxVxL motif motif is present at residues 233-246 (FKGKVPMVVLQDIL). 2 disordered regions span residues 250-432 (PPQI…KRLR) and 599-639 (DSDE…VPHG). Composition is skewed to low complexity over residues 282-296 (LSHS…TSSP) and 307-317 (SSTSPFPTSTP). Ser-310 is modified (phosphoserine). Basic and acidic residues predominate over residues 329-432 (STEKNKLRLQ…RKKEEEKRLR (104 aa)). Composition is skewed to acidic residues over residues 599-610 (DSDEEWEEEEPG) and 618-633 (GDDD…EDDG). The tract at residues 642–678 (SEDEGVTEECADPENHKVRQKLKAKEWDEFLAKGKRF) is necessary for homodimerization and competence for chromatin assembly. Positions 660-956 (RQKLKAKEWD…TLTASPLGAS (297 aa)) are binds to p60. At Thr-722 the chain carries Phosphothreonine. The disordered stretch occupies residues 765–790 (LLSNHTGSPRSPSTTYLHTPTPSEDA). Positions 767–786 (SNHTGSPRSPSTTYLHTPTP) are enriched in polar residues. Residues Ser-772, Ser-775, and Ser-803 each carry the phosphoserine modification. 2 disordered regions span residues 844–873 (SVPS…KRKS) and 933–956 (SGAG…LGAS). Residues 855–866 (SVPSTGPSQGTP) are compositionally biased toward polar residues. A Phosphothreonine modification is found at Thr-865. Ser-868, Ser-873, and Ser-951 each carry phosphoserine.

The protein belongs to the CHAF1A family. As to quaternary structure, homodimer. Part of the CAF-1 complex that contains RBBP4, CHAF1B and CHAF1A. CHAF1A binds directly to CHAF1B. Only minor amounts of RBBP4 are complexed with CHAF1A and CHAF1B in G1 phase. Interacts with PCNA; the interaction is direct. Interacts (via the PxVxL motif) with CBX5; the interaction is direct. Interacts with MBD1. Interacts with histones H3.1, H3.2 and H3.1t.

It localises to the nucleus. In terms of biological role, acts as a component of the histone chaperone complex chromatin assembly factor 1 (CAF-1), which assembles histone octamers onto DNA during replication and repair. CAF-1 performs the first step of the nucleosome assembly process, bringing newly synthesized histones H3 and H4 to replicating DNA; histones H2A/H2B can bind to this chromatin precursor subsequent to DNA replication to complete the histone octamer. It may play a role in heterochromatin maintenance in proliferating cells by bringing newly synthesized cbx proteins to heterochromatic DNA replication foci. The chain is Chromatin assembly factor 1 subunit A from Homo sapiens (Human).